Here is a 110-residue protein sequence, read N- to C-terminus: MKKLANYLWVEKVGDLYVFSMTPELQDDIGTVGYVEFVSPDEVKVDDEIVSIEASKTVIDVQTPLSGTIIERNTKAEEEPTILNSEKPEENWLFKLDDVDKEAFLALPEA.

Positions 10 to 97 constitute a Lipoyl-binding domain; sequence VEKVGDLYVF…PEENWLFKLD (88 aa). ADP-ribosyl aspartic acid is present on Asp-27. Lys-56 bears the N6-lipoyllysine mark.

In terms of assembly, lipoylated GcvH-L directly interacts with SAV0325, which reverses the SirTM-mediated mono-ADP-ribosylation of GcvH-L, and with the oxidoreductase SAV0322. Is lipoylated on K-56 by LplA2 (SAV0327) and then mono-ADP-ribosylated, probably on D-27, by SirTM (SAV0326). The mono-ADP-ribosylation state of GcvH-L might regulate the availability of the lipoyl moiety for redox reactions; ADP-ribosylation would inhibit the interaction of the oxidoreductase with GcvH-L when it is not required, thus ADP-ribosylation of GcvH-L might be acting to keep the response 'off' under non-stress conditions.

In terms of biological role, may act as a carrier protein for the ROS scavenging lipoyl moiety and/or as a substrate for oxidoreductases such as SAV0322 and SAV0323. The protein is Glycine cleavage system H-like protein of Staphylococcus aureus (strain Mu50 / ATCC 700699).